The following is a 237-amino-acid chain: MOB kinase activator 2 (237 aa).

The tract at residues 1 to 21 (MDWLMGKSKAKPNGKKPAAEE) is disordered. Residues cysteine 78, cysteine 83, histidine 157, and histidine 162 each contribute to the Zn(2+) site. The span at 217-229 (GGSGDGAGSGGPG) shows a compositional bias: gly residues. A disordered region spans residues 217 to 237 (GGSGDGAGSGGPGAQNHVKER).

This sequence belongs to the MOB1/phocein family. In terms of assembly, binds STK38 and STK38L. Post-translationally, phosphorylated.

Its subcellular location is the nucleus. It is found in the cytoplasm. It localises to the perinuclear region. Its function is as follows. Stimulates the autophosphorylation and kinase activity of STK38 and STK38L. This Homo sapiens (Human) protein is MOB kinase activator 2 (MOB2).